A 915-amino-acid chain; its full sequence is Isoleucine--tRNA ligase (915 aa).

A 'HIGH' region motif is present at residues 57-67 (PYANGNLHMGH). Glu554 is an L-isoleucyl-5'-AMP binding site. Residues 595-599 (KMSKS) carry the 'KMSKS' region motif. Lys598 provides a ligand contact to ATP. The Zn(2+) site is built by Cys885, Cys888, Cys905, and Cys908.

Belongs to the class-I aminoacyl-tRNA synthetase family. IleS type 1 subfamily. As to quaternary structure, monomer. Requires Zn(2+) as cofactor.

It localises to the cytoplasm. It carries out the reaction tRNA(Ile) + L-isoleucine + ATP = L-isoleucyl-tRNA(Ile) + AMP + diphosphate. Its function is as follows. Catalyzes the attachment of isoleucine to tRNA(Ile). As IleRS can inadvertently accommodate and process structurally similar amino acids such as valine, to avoid such errors it has two additional distinct tRNA(Ile)-dependent editing activities. One activity is designated as 'pretransfer' editing and involves the hydrolysis of activated Val-AMP. The other activity is designated 'posttransfer' editing and involves deacylation of mischarged Val-tRNA(Ile). The chain is Isoleucine--tRNA ligase from Staphylococcus carnosus (strain TM300).